Here is a 166-residue protein sequence, read N- to C-terminus: Ribonuclease H (166 aa).

The region spanning 5–147 (PRKRVALFTD…VDREARRQAQ (143 aa)) is the RNase H type-1 domain. Mg(2+)-binding residues include aspartate 14, glutamate 52, aspartate 74, and aspartate 139. Positions 128-166 (GHTGHPENERVDREARRQAQSQAKTPCPPQAPTLFHEEA) are disordered. Over residues 131–144 (GHPENERVDREARR) the composition is skewed to basic and acidic residues.

This sequence belongs to the RNase H family. In terms of assembly, monomer. Mg(2+) serves as cofactor.

It is found in the cytoplasm. The catalysed reaction is Endonucleolytic cleavage to 5'-phosphomonoester.. Its function is as follows. Endonuclease that specifically degrades the RNA of RNA-DNA hybrids. This chain is Ribonuclease H, found in Thermus thermophilus (strain ATCC BAA-163 / DSM 7039 / HB27).